A 416-amino-acid chain; its full sequence is Enterobactin exporter EntS (416 aa).

Over 1-21 (MNKQSWLLNLSLLKTHPAFRA) the chain is Cytoplasmic. The chain crosses the membrane as a helical span at residues 22–42 (VFLARFISIVSLGLLGVAVPV). Residues 43 to 55 (QIQMMTHSTWQVG) lie on the Periplasmic side of the membrane. Residues 56 to 76 (LSVTLTGGAMFVGLMVGGVLA) form a helical membrane-spanning segment. Over 77 to 83 (DRYERKK) the chain is Cytoplasmic. The chain crosses the membrane as a helical span at residues 84 to 104 (VILLARGTCGIGFIGLCLNAL). Over 105 to 109 (LPEPS) the chain is Periplasmic. A helical membrane pass occupies residues 110 to 130 (LLAIYLLGLWDGFFASLGVTA). Over 131–156 (LLAATPALVGRENLMQAGAITMLTVR) the chain is Cytoplasmic. The chain crosses the membrane as a helical span at residues 157-177 (LGSVISPMIGGLLLATGGVAW). Asn-178 is a topological domain (periplasmic). A helical transmembrane segment spans residues 179–199 (YGLAAAGTFITLLPLLSLPAL). The Cytoplasmic portion of the chain corresponds to 200 to 218 (PPPPQPREHPLKSLLAGFR). A helical transmembrane segment spans residues 219–239 (FLLASPLVGGIALLGGLLTMA). Residues 240–256 (SAVRVLYPALADNWQMS) are Periplasmic-facing. Residues 257–277 (AAQIGFLYAAIPLGAAIGALT) form a helical membrane-spanning segment. Residues 278-287 (SGKLAHSVRP) lie on the Cytoplasmic side of the membrane. A helical membrane pass occupies residues 288–307 (GLLMLLSTLGAFLAIGLFGL). The Periplasmic segment spans residues 308 to 313 (MPMWIL). A helical transmembrane segment spans residues 314–336 (GVVCLALFGWLSAVSSLLQYTML). At 337–356 (QTQTPEAMLGRINGLWTAQN) the chain is on the cytoplasmic side. A helical membrane pass occupies residues 357-377 (VTGDAIGAALLGGLGAMMTPV). Position 378 (Ala-378) is a topological domain, periplasmic. A helical transmembrane segment spans residues 379 to 399 (SASASGFGLLIIGVLLLLVLV). Topologically, residues 400-416 (ELRRFRQTPPQVTASDS) are cytoplasmic.

It belongs to the major facilitator superfamily. EntS (TC 2.A.1.38) family.

It localises to the cell inner membrane. Its function is as follows. Component of an export pathway for enterobactin. The sequence is that of Enterobactin exporter EntS from Escherichia coli O6:H1 (strain CFT073 / ATCC 700928 / UPEC).